A 1131-amino-acid chain; its full sequence is Phytochrome a (1131 aa).

Positions 1–23 (MSSSRPAHSSSSSSRTRQSSQAR) are enriched in low complexity. The tract at residues 1 to 26 (MSSSRPAHSSSSSSRTRQSSQARILA) is disordered. The region spanning 219–404 (SMEALCNTVV…VFAVHVNKEF (186 aa)) is the GAF domain. Residue cysteine 324 coordinates phytochromobilin. PAS domains follow at residues 620–690 (VTSE…LQGK) and 750–834 (VEGD…LAGE). The Histidine kinase domain occupies 904–1124 (YMRHAINKPL…TFILTAELAA (221 aa)).

The protein belongs to the phytochrome family. Homodimer. Post-translationally, contains one covalently linked phytochromobilin chromophore.

In terms of biological role, regulatory photoreceptor which exists in two forms that are reversibly interconvertible by light: the Pr form that absorbs maximally in the red region of the spectrum and the Pfr form that absorbs maximally in the far-red region. Photoconversion of Pr to Pfr induces an array of morphogenic responses, whereas reconversion of Pfr to Pr cancels the induction of those responses. Pfr controls the expression of a number of nuclear genes including those encoding the small subunit of ribulose-bisphosphate carboxylase, chlorophyll A/B binding protein, protochlorophyllide reductase, rRNA, etc. It also controls the expression of its own gene(s) in a negative feedback fashion. This Sorghum bicolor (Sorghum) protein is Phytochrome a (PHYA).